The following is a 129-amino-acid chain: Iron-sulfur cluster assembly 1 homolog, mitochondrial (129 aa).

Residues 1–12 constitute a mitochondrion transit peptide; sequence MSASLVRATVRA. Residues Cys-57, Cys-121, and Cys-123 each contribute to the Fe cation site.

Belongs to the HesB/IscA family. In terms of assembly, interacts with CRY2, but not with CRY1 (in vitro).

The protein resides in the mitochondrion. Functionally, involved in the maturation of mitochondrial 4Fe-4S proteins functioning late in the iron-sulfur cluster assembly pathway. Probably involved in the binding of an intermediate of Fe/S cluster assembly. The polypeptide is Iron-sulfur cluster assembly 1 homolog, mitochondrial (ISCA1) (Bos taurus (Bovine)).